The chain runs to 927 residues: Dual serine/threonine and tyrosine protein kinase (927 aa).

The interval 1-21 (MEADGQSWAGESVSGPGPGGG) is disordered. Positions 393–429 (RKKENELYESLMNIANRKQEEMKDMIVETLNTMKEEL) form a coiled coil. In terms of domain architecture, Protein kinase spans 650–904 (PKLGQELGRG…PLLGIVQPML (255 aa)). ATP-binding positions include 656-664 (LGRGQYGVV) and Lys679. The active-site Proton acceptor is the Asp775.

It belongs to the protein kinase superfamily. Ser/Thr protein kinase family. In terms of tissue distribution, expressed in brain, heart, skeletal muscle, kidney and lung. Expressed in maturing tubular epithelia, with the most prominent expression in the medulla and the papilla. Expressed in thin ascending limb of the loop of Henle and the distal convoluted tubule. Expressed in all layers of transitional ureteric epithelium and in the ureteric smooth-muscle cells (at protein level). Widely expressed. Highly expressed in many brain regions, including in cerebellum, olfactory, hippocampus and cerebral cortex.

The protein localises to the cytoplasm. Its subcellular location is the cell membrane. The protein resides in the apical cell membrane. It is found in the basolateral cell membrane. It localises to the cell junction. The enzyme catalyses L-seryl-[protein] + ATP = O-phospho-L-seryl-[protein] + ADP + H(+). The catalysed reaction is L-threonyl-[protein] + ATP = O-phospho-L-threonyl-[protein] + ADP + H(+). It catalyses the reaction L-tyrosyl-[protein] + ATP = O-phospho-L-tyrosyl-[protein] + ADP + H(+). Acts as a positive regulator of ERK phosphorylation downstream of fibroblast growth factor-receptor activation. Involved in the regulation of both caspase-dependent apoptosis and caspase-independent cell death. In the skin, it plays a predominant role in suppressing caspase-dependent apoptosis in response to UV stress in a range of dermal cell types. This chain is Dual serine/threonine and tyrosine protein kinase (Dstyk), found in Mus musculus (Mouse).